A 142-amino-acid polypeptide reads, in one-letter code: HTH-type transcriptional repressor NsrR (142 aa).

Positions 2–129 (QLTSFTDYGL…DRHTLAELVE (128 aa)) constitute an HTH rrf2-type domain. The segment at residues 28-51 (ITEVTQVYGVSRNHMVKIINQLSH) is a DNA-binding region (H-T-H motif). Cysteine 91, cysteine 96, and cysteine 102 together coordinate [2Fe-2S] cluster.

[2Fe-2S] cluster serves as cofactor.

Its function is as follows. Nitric oxide-sensitive repressor of genes involved in protecting the cell against nitrosative stress. May require iron for activity. This is HTH-type transcriptional repressor NsrR from Proteus mirabilis (strain HI4320).